The primary structure comprises 213 residues: MKAYQRRFIEFALGKQVLKFGEFTLKSGRTSPYFFNAGLFNTGRDLALLGRFYAEALVESGIAFDVLFGPAYKGIPIATTTAVALAEHHDRDMPYCFNRKEAKDHGEGGTLVGSALAGRVMLVDDVITAGTAIRESMSIIQANGAALAGVLISLDRQERGRGELSAIQEVERDYGCRVISIITLGDLIHYLEEQPEMAQHLAAVKAYRARYGV.

Residue K26 coordinates 5-phospho-alpha-D-ribose 1-diphosphate. 34–35 contributes to the orotate binding site; that stretch reads FF. 5-phospho-alpha-D-ribose 1-diphosphate-binding positions include 72 to 73, R99, K100, K103, H105, and 124 to 132; these read YK and DDVITAGTA. 2 residues coordinate orotate: T128 and R156.

Belongs to the purine/pyrimidine phosphoribosyltransferase family. PyrE subfamily. Homodimer. The cofactor is Mg(2+).

The catalysed reaction is orotidine 5'-phosphate + diphosphate = orotate + 5-phospho-alpha-D-ribose 1-diphosphate. Its pathway is pyrimidine metabolism; UMP biosynthesis via de novo pathway; UMP from orotate: step 1/2. In terms of biological role, catalyzes the transfer of a ribosyl phosphate group from 5-phosphoribose 1-diphosphate to orotate, leading to the formation of orotidine monophosphate (OMP). The chain is Orotate phosphoribosyltransferase from Edwardsiella ictaluri (strain 93-146).